Reading from the N-terminus, the 157-residue chain is Glutaredoxin-2, mitochondrial (157 aa).

The transit peptide at 1-19 (MSWYRAASVGRRLVASGRI) directs the protein to the mitochondrion. The Glutaredoxin domain occupies 50 to 150 (VNQIQETISN…PLVHQCYLNK (101 aa)). Position 61 (Cys-61) interacts with [2Fe-2S] cluster. Lys-67 contacts glutathione. Cys-70 is modified (S-glutathionyl cysteine; alternate). The cysteines at positions 70 and 73 are disulfide-linked. Glutathione-binding residues include Gln-102 and Val-114. Residue Cys-146 participates in [2Fe-2S] cluster binding.

This sequence belongs to the glutaredoxin family. In terms of assembly, monomer; active form. Homodimer; inactive form. The homodimer is probably linked by 1 2Fe-2S cluster.

It localises to the mitochondrion. Its subcellular location is the nucleus. With respect to regulation, the 2Fe-2S present in the homodimer leads to inactivation of the enzyme. The 2Fe-2S may serve as a redox sensor: the presence of one-electron oxidants or reductants leading to the loss of the 2Fe-2S cluster, subsequent monomerization and activation of the enzyme. Glutathione-dependent oxidoreductase that facilitates the maintenance of mitochondrial redox homeostasis upon induction of apoptosis by oxidative stress. Involved in response to hydrogen peroxide and regulation of apoptosis caused by oxidative stress. Acts as a very efficient catalyst of monothiol reactions because of its high affinity for protein glutathione-mixed disulfides. Can receive electrons not only from glutathione (GSH), but also from thioredoxin reductase supporting both monothiol and dithiol reactions. Efficiently catalyzes both glutathionylation and deglutathionylation of mitochondrial complex I, which in turn regulates the superoxide production by the complex. Overexpression decreases the susceptibility to apoptosis and prevents loss of cardiolipin and cytochrome c release. The sequence is that of Glutaredoxin-2, mitochondrial (Glrx2) from Rattus norvegicus (Rat).